Reading from the N-terminus, the 1059-residue chain is Translation initiation factor IF-2 (1059 aa).

Polar residues-rich tracts occupy residues 55-75 and 107-126; these read LPHSPSLSAAPEKSNSQNQDS and KINNNLVTTPPNTSVLNNQV. Disordered regions lie at residues 55 to 81, 93 to 394, and 418 to 468; these read LPHSPSLSAAPEKSNSQNQDSGIGYNE, PKPL…RLRL, and SLSL…QSAE. Over residues 178–187 the composition is skewed to basic and acidic residues; sequence DSNEKSKVEV. Residues 202-211 show a composition bias toward polar residues; that stretch reads LNRNLRNTGV. Positions 216–229 are enriched in basic residues; sequence QKNKKPKQEGKKRK. Basic and acidic residues-rich tracts occupy residues 230-252 and 259-273; these read DKEEKPFEKPAIVSKKENKDTSI and SKKENKDTFQNRESV. The segment covering 274–284 has biased composition (polar residues); the sequence is KTSASDTSSQL. Composition is skewed to basic and acidic residues over residues 291 to 300 and 359 to 368; these read KPTVKLKQEQ and LTKDKKVSKW. Residues 452–463 are compositionally biased toward low complexity; sequence SHESVQSESNEQ. A tr-type G domain is found at 556–733; the sequence is RRPPVVTIMG…EVEDLQANPE (178 aa). A G1 region spans residues 565–572; that stretch reads GHVDHGKT. Residue 565 to 572 coordinates GTP; that stretch reads GHVDHGKT. Positions 590-594 are G2; the sequence is GITQH. Residues 615 to 618 are G3; the sequence is DTPG. GTP-binding positions include 615–619 and 669–672; these read DTPGH and NKID. Positions 669-672 are G4; that stretch reads NKID. The interval 705-707 is G5; it reads SAI.

Belongs to the TRAFAC class translation factor GTPase superfamily. Classic translation factor GTPase family. IF-2 subfamily.

The protein localises to the cytoplasm. One of the essential components for the initiation of protein synthesis. Protects formylmethionyl-tRNA from spontaneous hydrolysis and promotes its binding to the 30S ribosomal subunits. Also involved in the hydrolysis of GTP during the formation of the 70S ribosomal complex. This is Translation initiation factor IF-2 from Trichodesmium erythraeum (strain IMS101).